The following is a 352-amino-acid chain: Inhibin beta C chain (352 aa).

Positions 1 to 18 are cleaved as a signal peptide; it reads MTSSLLLAFLLLAPTTVA. A propeptide spanning residues 19-236 is cleaved from the precursor; that stretch reads TPRAGGQCPA…VGGKHQIHRR (218 aa). Residues Asn-110, Asn-143, and Asn-161 are each glycosylated (N-linked (GlcNAc...) asparagine). Intrachain disulfides connect Cys-240–Cys-248, Cys-247–Cys-317, Cys-276–Cys-349, and Cys-280–Cys-351.

This sequence belongs to the TGF-beta family. In terms of assembly, homodimeric or heterodimeric through association with alpha and beta subunits, linked by one or more disulfide bonds. Inhibins are heterodimers of one alpha and one beta subunit. Activins are homo- or heterodimers of beta subunits only. In terms of tissue distribution, expressed in benign prostatic hyperplasia.

The protein resides in the secreted. Its function is as follows. Inhibins and activins inhibit and activate, respectively, the secretion of follitropin by the pituitary gland. Inhibins/activins are involved in regulating a number of diverse functions such as hypothalamic and pituitary hormone secretion, gonadal hormone secretion, germ cell development and maturation, erythroid differentiation, insulin secretion, nerve cell survival, embryonic axial development or bone growth, depending on their subunit composition. Inhibins appear to oppose the functions of activins. The protein is Inhibin beta C chain (INHBC) of Homo sapiens (Human).